We begin with the raw amino-acid sequence, 592 residues long: Peroxisomal targeting signal receptor (592 aa).

Residue cysteine 10 forms a Glycyl cysteine thioester (Cys-Gly) (interchain with G-Cter in ubiquitin) linkage. The amphipathic helix 1 (AH1) stretch occupies residues serine 11–glutamine 33. A Glycyl lysine isopeptide (Lys-Gly) (interchain with G-Cter in ubiquitin) cross-link involves residue lysine 22. The segment covering lysine 22 to glycine 46 has biased composition (polar residues). Residues lysine 22–lysine 49 form a disordered region. The tract at residues arginine 58–phenylalanine 76 is amphipathic helix 2 (AH2). 3 consecutive short sequence motifs (wxxxF/Y motif) follow at residues tryptophan 100 to phenylalanine 104, tryptophan 128 to phenylalanine 132, and tryptophan 185 to phenylalanine 189. The amphipathic helix 4 (AH4) stretch occupies residues phenylalanine 223–phenylalanine 239. Residues tryptophan 262 to phenylalanine 266 carry the WxxxF/Y motif 4 motif. 5 TPR repeats span residues aspartate 295–histidine 329, valine 330–asparagine 363, alanine 440–aspartate 473, isoleucine 475–phenylalanine 507, and arginine 509–glutamate 541.

It belongs to the peroxisomal targeting signal receptor family. In terms of assembly, interacts (via WxxxF/Y and LVxEF motifs) with PEX14; promoting translocation through the PEX13-PEX14 docking complex. In terms of processing, monoubiquitinated at Cys-10 by PEX2 during PEX5 passage through the retrotranslocation channel: monoubiquitination acts as a signal for PEX5 extraction and is required for proper export from peroxisomes and recycling. When PEX5 recycling is compromised, polyubiquitinated at Lys-22 by PEX10 during its passage through the retrotranslocation channel, leading to its degradation.

It is found in the cytoplasm. Its subcellular location is the cytosol. The protein localises to the peroxisome matrix. Receptor that mediates peroxisomal import of proteins containing a C-terminal PTS1-type tripeptide peroxisomal targeting signal (SKL-type). Binds to cargo proteins containing a PTS1 peroxisomal targeting signal in the cytosol, and translocates them into the peroxisome matrix by passing through the PEX13-PEX14 docking complex along with cargo proteins. PEX5 receptor is then retrotranslocated into the cytosol, leading to release of bound cargo in the peroxisome matrix, and reset for a subsequent peroxisome import cycle. This chain is Peroxisomal targeting signal receptor (PEX5), found in Candida albicans (strain SC5314 / ATCC MYA-2876) (Yeast).